Reading from the N-terminus, the 213-residue chain is Virulence factor 1 (213 aa).

The protein resides in the host mitochondrion. Plays a role in antagonizing the host innate immune response. The protein is Virulence factor 1 of Norovirus (isolate Mouse/NoV/United States/MNV1/2002/GV) (MNV-1).